A 158-amino-acid chain; its full sequence is Eukaryotic translation initiation factor 5A-3 (158 aa).

Basic and acidic residues predominate over residues 1-10 (MSDDEHHFES). Positions 1–23 (MSDDEHHFESSDAGASKTYPQQA) are disordered. A Phosphoserine modification is found at Ser-2. Lys-51 is modified (hypusine).

This sequence belongs to the eIF-5A family. Lys-52 undergoes hypusination, a unique post-translational modification that consists in the addition of a butylamino group from spermidine to lysine side chain, leading to the formation of the unusual amino acid hypusine. eIF-5As are the only known proteins to undergo this modification, which is essential for their function. Expressed in the vascular tissues of roots, stems and leaves. Localized in phloem companion cells rather than sieve-tube members. Not expressed in xylem or procambium. Detected in root tips and in the chalazal tissue of fertilized ovules.

Translation factor that promotes translation elongation and termination, particularly upon ribosome stalling at specific amino acid sequence contexts. Binds between the exit (E) and peptidyl (P) site of the ribosome and promotes rescue of stalled ribosome: specifically required for efficient translation of polyproline-containing peptides as well as other motifs that stall the ribosome. Acts as a ribosome quality control (RQC) cofactor by joining the RQC complex to facilitate peptidyl transfer during CAT tailing step. Involved in supporting growth and plays a regulatory role in the response to sub-lethal osmotic and nutrient stress. The chain is Eukaryotic translation initiation factor 5A-3 (ELF5A-3) from Arabidopsis thaliana (Mouse-ear cress).